A 336-amino-acid polypeptide reads, in one-letter code: Holliday junction branch migration complex subunit RuvB (336 aa).

Residues 4–184 form a large ATPase domain (RuvB-L) region; that stretch reads ADRLISAASN…FGIVQRLEFY (181 aa). ATP-binding positions include isoleucine 23, arginine 24, glycine 65, lysine 68, threonine 69, threonine 70, 131-133, arginine 174, tyrosine 184, and arginine 221; that span reads EDY. A Mg(2+)-binding site is contributed by threonine 69. The tract at residues 185 to 255 is small ATPAse domain (RuvB-S); that stretch reads QVPDLQYIVG…VAAQALDMLN (71 aa). Positions 258–336 are head domain (RuvB-H); sequence AEGFDYMDRK…HFGITPPEMP (79 aa). Arginine 294, arginine 313, and arginine 318 together coordinate DNA.

The protein belongs to the RuvB family. As to quaternary structure, homohexamer. Forms an RuvA(8)-RuvB(12)-Holliday junction (HJ) complex. HJ DNA is sandwiched between 2 RuvA tetramers; dsDNA enters through RuvA and exits via RuvB. An RuvB hexamer assembles on each DNA strand where it exits the tetramer. Each RuvB hexamer is contacted by two RuvA subunits (via domain III) on 2 adjacent RuvB subunits; this complex drives branch migration. In the full resolvosome a probable DNA-RuvA(4)-RuvB(12)-RuvC(2) complex forms which resolves the HJ.

The protein localises to the cytoplasm. The catalysed reaction is ATP + H2O = ADP + phosphate + H(+). Functionally, the RuvA-RuvB-RuvC complex processes Holliday junction (HJ) DNA during genetic recombination and DNA repair, while the RuvA-RuvB complex plays an important role in the rescue of blocked DNA replication forks via replication fork reversal (RFR). RuvA specifically binds to HJ cruciform DNA, conferring on it an open structure. The RuvB hexamer acts as an ATP-dependent pump, pulling dsDNA into and through the RuvAB complex. RuvB forms 2 homohexamers on either side of HJ DNA bound by 1 or 2 RuvA tetramers; 4 subunits per hexamer contact DNA at a time. Coordinated motions by a converter formed by DNA-disengaged RuvB subunits stimulates ATP hydrolysis and nucleotide exchange. Immobilization of the converter enables RuvB to convert the ATP-contained energy into a lever motion, pulling 2 nucleotides of DNA out of the RuvA tetramer per ATP hydrolyzed, thus driving DNA branch migration. The RuvB motors rotate together with the DNA substrate, which together with the progressing nucleotide cycle form the mechanistic basis for DNA recombination by continuous HJ branch migration. Branch migration allows RuvC to scan DNA until it finds its consensus sequence, where it cleaves and resolves cruciform DNA. This chain is Holliday junction branch migration complex subunit RuvB, found in Enterobacter sp. (strain 638).